The following is a 282-amino-acid chain: Pantothenate synthetase (282 aa).

26 to 33 (MGNLHEGH) serves as a coordination point for ATP. The active-site Proton donor is the His-33. (R)-pantoate is bound at residue Gln-57. Gln-57 lines the beta-alanine pocket. Residue 144 to 147 (GQKD) participates in ATP binding. Residue Gln-150 coordinates (R)-pantoate. Residues Leu-173 and 181-184 (LSSR) each bind ATP.

Belongs to the pantothenate synthetase family. As to quaternary structure, homodimer.

The protein resides in the cytoplasm. It catalyses the reaction (R)-pantoate + beta-alanine + ATP = (R)-pantothenate + AMP + diphosphate + H(+). Its pathway is cofactor biosynthesis; (R)-pantothenate biosynthesis; (R)-pantothenate from (R)-pantoate and beta-alanine: step 1/1. In terms of biological role, catalyzes the condensation of pantoate with beta-alanine in an ATP-dependent reaction via a pantoyl-adenylate intermediate. In Albidiferax ferrireducens (strain ATCC BAA-621 / DSM 15236 / T118) (Rhodoferax ferrireducens), this protein is Pantothenate synthetase.